The sequence spans 2542 residues: Ankyrin repeat and KH domain-containing protein 1 (2542 aa).

N-acetylmethionine is present on methionine 1. Residues 1-10 are compositionally biased toward gly residues; that stretch reads MLTDSGGGGT. Disordered regions lie at residues 1–44 and 50–69; these read MLTD…IRTV and AGPA…SGTG. The span at 20 to 29 shows a compositional bias: low complexity; sequence APRSAPAGAS. Positions 57-69 are enriched in gly residues; the sequence is GSSGGGGSGSGTG. A phosphoserine mark is found at serine 101 and serine 105. ANK repeat units follow at residues 204–233, 237–266, 271–300, 304–333, 337–366, 371–400, 404–433, 437–466, 470–499, 504–533, 534–563, 567–596, 600–629, 634–663, and 667–696; these read VDTR…SVNE, EGES…NVED, GDIT…DVNS, TGNT…NIED, NGHT…GINT, FKES…DQEH, EMHT…QVNM, SFES…NLEE, EGYT…NINA, TQET…DIEL, GCST…NVHA, TGDT…DLEH, GGRT…NVNR, NDHT…DPTH, and DGST…NVLS. The stretch at 775–852 forms a coiled coil; it reads LECIVEETEG…RQLQMKTQQQ (78 aa). Serine 803 is modified (phosphoserine). ANK repeat units lie at residues 1054–1083, 1087–1116, 1121–1150, 1154–1183, 1189–1218, 1223–1252, 1256–1285, 1291–1320, 1324–1353, and 1357–1386; these read NHDT…KIEH, KGFT…DIEA, TKDT…NKEH, SDYT…EINS, LGIS…DINA, NRNT…NVEH, TGLT…DVNA, SRDT…HIDV, KGNT…DVDA, and RKIT…QFPS. Residues 1415–1485 are a coiled coil; the sequence is KAKDQQAAEA…ENKPKENSEL (71 aa). 3 disordered regions span residues 1441–1517, 1534–1614, and 1632–1664; these read REES…TIGI, NVVT…SQEL, and SQEE…YKTV. The span at 1453 to 1463 shows a compositional bias: basic residues; that stretch reads REKRKEKRKKK. Basic and acidic residues predominate over residues 1464-1483; the sequence is KEEQKRKQEEDEENKPKENS. The segment covering 1484–1502 has biased composition (acidic residues); sequence ELPEDEDEEENDEDVEQEV. Residues 1503 to 1517 show a composition bias toward low complexity; the sequence is PIEPPSATTTTTIGI. Serine 1540 carries the post-translational modification Phosphoserine. Position 1553 is a phosphothreonine (threonine 1553). The segment covering 1590–1603 has biased composition (low complexity); it reads NSDSDNLDSTDCNS. The segment covering 1604-1614 has biased composition (polar residues); the sequence is ESSSGGKSQEL. Residue serine 1632 is modified to Phosphoserine. Over residues 1638 to 1664 the composition is skewed to polar residues; sequence STATSKTQTRLEGEVTPNSLSTSYKTV. Threonine 1653 is modified (phosphothreonine). A KH domain is found at 1695 to 1759; the sequence is RRSKKLSVPA…ESTRYAVQLI (65 aa). Disordered stretches follow at residues 1886-1923, 1987-2106, and 2260-2367; these read NTWG…VLPS, PSVS…APLT, and NMHP…IPPP. Positions 1898–1922 are enriched in polar residues; the sequence is PGNTNSSPKHNNTSRLPNQNGTVLP. Residues 1987–1996 are compositionally biased toward low complexity; that stretch reads PSVSSAPITS. Positions 1997-2019 are enriched in polar residues; the sequence is GQAPTTFLPASTSQAQLSSQKME. A compositionally biased stretch (low complexity) spans 2042–2077; sequence CTPSSTANSCSSSASNTPGAPETHPSSSPTPTSSNT. Residues 2078–2106 show a composition bias toward polar residues; the sequence is QEEAQPSSVSDLSPMSMPFASNSEPAPLT. 2 stretches are compositionally biased toward low complexity: residues 2285–2308 and 2337–2349; these read LPSI…FSGI and TSAS…APPT.

It belongs to the mask family. As to quaternary structure, interacts with PTPN11. Isoform 2 interacts with HIV-1 VPR. Interacts with NOD2. Ubiquitous with high expression in cervix, spleen and brain. Expressed in hematopoietic cells with increased expression in leukemia cells. Isoform 2 is highly expressed in spleen with almost no expression in muscle and brain.

It is found in the cytoplasm. Functionally, may play a role as a scaffolding protein that may be associated with the abnormal phenotype of leukemia cells. Isoform 2 may possess an antiapoptotic effect and protect cells during normal cell survival through its regulation of caspases. This is Ankyrin repeat and KH domain-containing protein 1 (ANKHD1) from Homo sapiens (Human).